Reading from the N-terminus, the 337-residue chain is 4-hydroxythreonine-4-phosphate dehydrogenase (337 aa).

Substrate-binding residues include histidine 139 and threonine 140. Residues histidine 173, histidine 218, and histidine 273 each coordinate a divalent metal cation. Substrate contacts are provided by lysine 281, asparagine 290, and arginine 299.

Belongs to the PdxA family. In terms of assembly, homodimer. The cofactor is Zn(2+). Requires Mg(2+) as cofactor. It depends on Co(2+) as a cofactor.

The protein localises to the cytoplasm. It catalyses the reaction 4-(phosphooxy)-L-threonine + NAD(+) = 3-amino-2-oxopropyl phosphate + CO2 + NADH. It functions in the pathway cofactor biosynthesis; pyridoxine 5'-phosphate biosynthesis; pyridoxine 5'-phosphate from D-erythrose 4-phosphate: step 4/5. In terms of biological role, catalyzes the NAD(P)-dependent oxidation of 4-(phosphooxy)-L-threonine (HTP) into 2-amino-3-oxo-4-(phosphooxy)butyric acid which spontaneously decarboxylates to form 3-amino-2-oxopropyl phosphate (AHAP). In Rhodopseudomonas palustris (strain ATCC BAA-98 / CGA009), this protein is 4-hydroxythreonine-4-phosphate dehydrogenase.